The primary structure comprises 242 residues: U1 small nuclear ribonucleoprotein C (242 aa).

The Matrin-type; degenerate zinc finger occupies Tyr-3–Glu-35. Residues Gly-60–Lys-242 form a disordered region. 4 stretches are compositionally biased toward pro residues: residues Met-90–Pro-107, Pro-136–Asn-149, Pro-156–Pro-183, and Pro-201–Pro-213. Polar residues predominate over residues Pro-231–Lys-242.

This sequence belongs to the U1 small nuclear ribonucleoprotein C family. As to quaternary structure, U1 snRNP is composed of the 7 core Sm proteins B/B', D1, D2, D3, E, F and G that assemble in a heptameric protein ring on the Sm site of the small nuclear RNA to form the core snRNP, and at least 3 U1 snRNP-specific proteins U1-70K, U1-A and U1-C. U1-C interacts with U1 snRNA and the 5' splice-site region of the pre-mRNA.

Its subcellular location is the nucleus. Functionally, component of the spliceosomal U1 snRNP, which is essential for recognition of the pre-mRNA 5' splice-site and the subsequent assembly of the spliceosome. U1-C is directly involved in initial 5' splice-site recognition for both constitutive and regulated alternative splicing. The interaction with the 5' splice-site seems to precede base-pairing between the pre-mRNA and the U1 snRNA. Stimulates commitment or early (E) complex formation by stabilizing the base pairing of the 5' end of the U1 snRNA and the 5' splice-site region. The polypeptide is U1 small nuclear ribonucleoprotein C (Ajellomyces capsulatus (strain G186AR / H82 / ATCC MYA-2454 / RMSCC 2432) (Darling's disease fungus)).